The primary structure comprises 61 residues: Conotoxin Tx-D021 (61 aa).

Residues 1–22 form the signal peptide; it reads MRCLPVFVILLLLIASTPSVDA. The propeptide occupies 23–48; that stretch reads RAKTRDDMSLASFHDDAKRILQILQD. Cys-60 is subject to Cysteine amide.

The protein belongs to the conotoxin T superfamily. Post-translationally, contains 2 disulfide bonds that can be either 'C1-C3, C2-C4' or 'C1-C4, C2-C3', since these disulfide connectivities have been observed for conotoxins with cysteine framework V (for examples, see AC P0DQQ7 and AC P81755). Expressed by the venom duct.

Its subcellular location is the secreted. The protein is Conotoxin Tx-D021 of Conus textile (Cloth-of-gold cone).